The following is a 716-amino-acid chain: Probable calcium-binding mitochondrial carrier K02F3.2 (716 aa).

The interval 1 to 345 (MSFDHLLTSS…CLKDIQAIDP (345 aa)) is N-terminal domain. 4 EF-hand domains span residues 93-121 (YNKE…FCAF), 127-162 (SPDA…TQPL), 165-195 (QDFD…CQLL), and 198-233 (FYEE…VKGH). Residues D106, T108, D110, E117, D140, N142, S144, T146, and E151 each coordinate Ca(2+). 5 residues coordinate Ca(2+): D211, N213, N215, T217, and D222. The interval 346-362 (ERLKRVSQMDRLINIKA) is linker loop domain. The tract at residues 372–664 (GTAFLESAYR…RLFYVDFAGS (293 aa)) is carrier domain. 3 Solcar repeats span residues 376–468 (LESA…MRDK), 475–560 (IPLY…AKLA), and 568–656 (NSPG…LQRL). Transmembrane regions (helical) follow at residues 382 to 399 (FLLG…VYPI), 443 to 462 (GLLP…LTMN), 485 to 498 (GTGG…TNPL), 535 to 554 (GSRA…FPAY), 574 to 591 (FASA…VTPA), and 631 to 650 (GTAA…LLTY). The interval 665-716 (RPTGSELATTKTIQDESSTNPDHVGGYKLAAATFSGIEHKFGLFLPKFETSK) is C-terminal domain.

Belongs to the mitochondrial carrier (TC 2.A.29) family. As to quaternary structure, homodimer (via N-terminus).

It is found in the mitochondrion inner membrane. Its function is as follows. Mitochondrial and calcium-binding carrier that catalyzes the calcium-dependent exchange of cytoplasmic glutamate with mitochondrial aspartate across the mitochondrial inner membrane. This Caenorhabditis elegans protein is Probable calcium-binding mitochondrial carrier K02F3.2.